The sequence spans 443 residues: Probable glycine dehydrogenase (decarboxylating) subunit 1 (443 aa).

It belongs to the GcvP family. N-terminal subunit subfamily. The glycine cleavage system is composed of four proteins: P, T, L and H. In this organism, the P 'protein' is a heterodimer of two subunits.

The enzyme catalyses N(6)-[(R)-lipoyl]-L-lysyl-[glycine-cleavage complex H protein] + glycine + H(+) = N(6)-[(R)-S(8)-aminomethyldihydrolipoyl]-L-lysyl-[glycine-cleavage complex H protein] + CO2. Functionally, the glycine cleavage system catalyzes the degradation of glycine. The P protein binds the alpha-amino group of glycine through its pyridoxal phosphate cofactor; CO(2) is released and the remaining methylamine moiety is then transferred to the lipoamide cofactor of the H protein. This Oleidesulfovibrio alaskensis (strain ATCC BAA-1058 / DSM 17464 / G20) (Desulfovibrio alaskensis) protein is Probable glycine dehydrogenase (decarboxylating) subunit 1.